A 30-amino-acid chain; its full sequence is uncharacterized protein (30 aa).

A helical membrane pass occupies residues 9 to 26; sequence YRLVIIVLISVYYRYRFF.

It localises to the plastid. The protein resides in the chloroplast membrane. This is an uncharacterized protein from Marchantia polymorpha (Common liverwort).